Reading from the N-terminus, the 145-residue chain is Phospholipase A2 (145 aa).

A signal peptide spans Met-1 to Gly-15. Gln-16 is subject to Pyrrolidone carboxylic acid. Positions Gln-16–Arg-22 are cleaved as a propeptide — removed by trypsin. 7 disulfide bridges follow: Cys-33–Cys-99, Cys-49–Cys-145, Cys-51–Cys-67, Cys-66–Cys-127, Cys-73–Cys-120, Cys-83–Cys-113, and Cys-106–Cys-118. Ca(2+) is bound by residues Tyr-50, Gly-52, and Gly-54. The active site involves His-70. Asp-71 is a binding site for Ca(2+). Asp-121 is an active-site residue.

The protein belongs to the phospholipase A2 family. In terms of assembly, monomer or homodimer. The cofactor is Ca(2+). Activated by trypsin cleavage in the duodenum. Can also be activated by thrombin or autocatalytically.

The protein localises to the secreted. The catalysed reaction is a 1,2-diacyl-sn-glycero-3-phosphocholine + H2O = a 1-acyl-sn-glycero-3-phosphocholine + a fatty acid + H(+). The enzyme catalyses 1,2-ditetradecanoyl-sn-glycero-3-phosphocholine + H2O = 1-tetradecanoyl-sn-glycero-3-phosphocholine + tetradecanoate + H(+). It catalyses the reaction 1,2-dihexadecanoyl-sn-glycero-3-phosphocholine + H2O = 1-hexadecanoyl-sn-glycero-3-phosphocholine + hexadecanoate + H(+). It carries out the reaction 1-hexadecanoyl-2-(9Z-octadecenoyl)-sn-glycero-3-phosphocholine + H2O = 1-hexadecanoyl-sn-glycero-3-phosphocholine + (9Z)-octadecenoate + H(+). The catalysed reaction is 1-hexadecanoyl-2-(5Z,8Z,11Z,14Z-eicosatetraenoyl)-sn-glycero-3-phosphocholine + H2O = 1-hexadecanoyl-sn-glycero-3-phosphocholine + (5Z,8Z,11Z,14Z)-eicosatetraenoate + H(+). The enzyme catalyses 1-hexadecanoyl-2-(9Z-octadecenoyl)-sn-glycero-3-phospho-(1'-sn-glycerol) + H2O = 1-hexadecanoyl-sn-glycero-3-phospho-(1'-sn-glycerol) + (9Z)-octadecenoate + H(+). It catalyses the reaction N-hexadecanoyl-1,2-di-(9Z-octadecenoyl)-sn-glycero-3-phosphoethanolamine + H2O = N-hexadecanoyl-1-(9Z-octadecenoyl)-sn-glycero-3-phosphoethanolamine + (9Z)-octadecenoate + H(+). It carries out the reaction 1-hexadecanoyl-2-(9Z,12Z-octadecadienoyl)-sn-glycero-3-phosphoethanolamine + H2O = 1-hexadecanoyl-sn-glycero-3-phosphoethanolamine + (9Z,12Z)-octadecadienoate + H(+). The catalysed reaction is N,1-dihexadecanoyl-2-(9Z,12Z-octadecadienoyl)-sn-glycero-3-phosphoethanolamine + H2O = N,1-dihexadecanoyl-sn-glycero-3-phosphoethanolamine + (9Z,12Z)-octadecadienoate + H(+). In terms of biological role, secretory calcium-dependent phospholipase A2 that primarily targets dietary phospholipids in the intestinal tract. Hydrolyzes the ester bond of the fatty acyl group attached at sn-2 position of phospholipids (phospholipase A2 activity) with preference for phosphatidylethanolamines and phosphatidylglycerols over phosphatidylcholines. May play a role in the biosynthesis of N-acyl ethanolamines that regulate energy metabolism and inflammation in the intestinal tract. Hydrolyzes N-acyl phosphatidylethanolamines to N-acyl lysophosphatidylethanolamines, which are further cleaved by a lysophospholipase D to release N-acyl ethanolamines. May act in an autocrine and paracrine manner. Has anti-helminth activity in a process regulated by gut microbiota. Upon helminth infection of intestinal epithelia, directly affects phosphatidylethanolamine contents in the membrane of helminth larvae, likely controlling an array of phospholipid-mediated cellular processes such as membrane fusion and cell division while providing for better immune recognition, ultimately reducing larvae integrity and infectivity. The sequence is that of Phospholipase A2 (PLA2G1B) from Bos taurus (Bovine).